The chain runs to 901 residues: Quinate repressor protein (901 aa).

The sufficient for repression stretch occupies residues 1 to 88 (MSILVRPPKR…DSLQTRRKFP (88 aa)). 2 disordered regions span residues 26 to 59 (LRDF…DGSR) and 878 to 901 (EEQG…GQPM). Residues 31 to 43 (QGNSASTPINTSA) are compositionally biased toward polar residues.

The protein in the N-terminal section; belongs to the shikimate kinase family. This sequence in the 2nd section; belongs to the type-I 3-dehydroquinase family. In the C-terminal section; belongs to the shikimate dehydrogenase family. As to quaternary structure, interacts with qutA; transcriptional activator of the quinate utilization pathway genes.

Multi-domain repressor protein that negatively regulates transcription of the quinate utilization pathway genes. May mediate its repressor activity by binding directly to the qutA activator protein. This chain is Quinate repressor protein (qutR), found in Emericella nidulans (strain FGSC A4 / ATCC 38163 / CBS 112.46 / NRRL 194 / M139) (Aspergillus nidulans).